A 217-amino-acid chain; its full sequence is N-(5'-phosphoribosyl)anthranilate isomerase (217 aa).

The protein belongs to the TrpF family.

The enzyme catalyses N-(5-phospho-beta-D-ribosyl)anthranilate = 1-(2-carboxyphenylamino)-1-deoxy-D-ribulose 5-phosphate. The protein operates within amino-acid biosynthesis; L-tryptophan biosynthesis; L-tryptophan from chorismate: step 3/5. This Synechococcus sp. (strain ATCC 27144 / PCC 6301 / SAUG 1402/1) (Anacystis nidulans) protein is N-(5'-phosphoribosyl)anthranilate isomerase.